Reading from the N-terminus, the 470-residue chain is Pyruvate kinase I (470 aa).

Position 32 (Arg32) interacts with substrate. The K(+) site is built by Asn34, Ser36, Asp66, and Thr67. Asn34–His37 lines the ATP pocket. 2 residues coordinate ATP: Arg73 and Lys156. Glu222 is a Mg(2+) binding site. Substrate is bound by residues Gly245, Asp246, and Thr278. Asp246 serves as a coordination point for Mg(2+).

This sequence belongs to the pyruvate kinase family. As to quaternary structure, homotetramer. It depends on Mg(2+) as a cofactor. K(+) serves as cofactor.

The catalysed reaction is pyruvate + ATP = phosphoenolpyruvate + ADP + H(+). The protein operates within carbohydrate degradation; glycolysis; pyruvate from D-glyceraldehyde 3-phosphate: step 5/5. This is Pyruvate kinase I (pykF) from Salmonella typhi.